The primary structure comprises 134 residues: MAETFNFELVSPERLLVSETVTEVVIPATEGEMTVMANHAPTMTTVRPGVVAVKTAAGNTERYAVFGGFADILPTGCTLLAESAVHVDELDSTVLENRIEAARAELEGASDEKKTRLEQLVAELTKLGEIVIPA.

It belongs to the ATPase epsilon chain family. As to quaternary structure, F-type ATPases have 2 components, CF(1) - the catalytic core - and CF(0) - the membrane proton channel. CF(1) has five subunits: alpha(3), beta(3), gamma(1), delta(1), epsilon(1). CF(0) has three main subunits: a, b and c.

Its subcellular location is the cell inner membrane. In terms of biological role, produces ATP from ADP in the presence of a proton gradient across the membrane. This chain is ATP synthase epsilon chain, found in Sinorhizobium medicae (strain WSM419) (Ensifer medicae).